The following is a 563-amino-acid chain: Alpha-keto-acid decarboxylase (563 aa).

Position 59 (Glu59) interacts with thiamine diphosphate. The disordered stretch occupies residues 347–367 (SSPPVASPPAEPLPPPPPREQ). Residues 351–366 (VASPPAEPLPPPPPRE) show a composition bias toward pro residues. Residues 394–476 (TSFYGMADHR…VVVNNDGYTV (83 aa)) form a thiamine pyrophosphate binding region. Mg(2+)-binding residues include Asp444, Asn471, and Gly473.

Belongs to the TPP enzyme family. The cofactor is a metal cation. It depends on thiamine diphosphate as a cofactor.

Its function is as follows. Decarboxylates branched-chain and aromatic alpha-keto acids to aldehydes. This Mycolicibacterium paratuberculosis (strain ATCC BAA-968 / K-10) (Mycobacterium paratuberculosis) protein is Alpha-keto-acid decarboxylase (kdc).